A 367-amino-acid chain; its full sequence is tRNA-specific 2-thiouridylase MnmA (367 aa).

Residues 24–31 (AMSGGVDS) and Leu50 contribute to the ATP site. Cys115 functions as the Nucleophile in the catalytic mechanism. An intrachain disulfide couples Cys115 to Cys211. Gly139 serves as a coordination point for ATP. An interaction with tRNA region spans residues 161-163 (KDQ). The active-site Cysteine persulfide intermediate is Cys211.

The protein belongs to the MnmA/TRMU family.

The protein resides in the cytoplasm. It catalyses the reaction S-sulfanyl-L-cysteinyl-[protein] + uridine(34) in tRNA + AH2 + ATP = 2-thiouridine(34) in tRNA + L-cysteinyl-[protein] + A + AMP + diphosphate + H(+). Functionally, catalyzes the 2-thiolation of uridine at the wobble position (U34) of tRNA, leading to the formation of s(2)U34. In Ehrlichia canis (strain Jake), this protein is tRNA-specific 2-thiouridylase MnmA.